The primary structure comprises 540 residues: L-aspartate oxidase (540 aa).

Residues 16 to 19, lysine 38, 45 to 52, 161 to 162, and aspartate 223 each bind FAD; these read SGAA, STFYAQGG, and NA. Succinate-binding positions include histidine 244 and 259 to 260; that span reads TE. Catalysis depends on arginine 290, which acts as the Proton donor/acceptor. Glutamate 375 contributes to the FAD binding site. Position 389 (serine 389) interacts with succinate. 391-392 is an FAD binding site; the sequence is SL.

It belongs to the FAD-dependent oxidoreductase 2 family. NadB subfamily. In terms of assembly, monomer. Homodimer. Both the monomeric and dimeric forms of the enzyme are catalytically active. Requires FAD as cofactor.

Its subcellular location is the cytoplasm. It catalyses the reaction L-aspartate + O2 = iminosuccinate + H2O2. The enzyme catalyses fumarate + L-aspartate = iminosuccinate + succinate. It participates in cofactor biosynthesis; NAD(+) biosynthesis; iminoaspartate from L-aspartate (oxidase route): step 1/1. Inhibited by the product iminoaspartate. Competitively inhibited by mesotartrate. NAD acts as a competitive inhibitor to FAD. Inhibited by iodoacetic acid, diethylpyrocarbonate and tetranitromethane. Its function is as follows. Catalyzes the oxidation of L-aspartate to iminoaspartate, the first step in the de novo biosynthesis of NAD(+). Can use either oxygen or fumarate as electron acceptors, which allows the enzyme to be functional under aerobic and anaerobic conditions. In vivo, fumarate is used under anaerobic conditions, and oxygen is the predominant electron acceptor under aerobic conditions due to the lower fumarate levels. In vitro, fumarate is a more efficient electron acceptor and is kinetically superior to oxygen. In Escherichia coli (strain K12), this protein is L-aspartate oxidase.